The chain runs to 188 residues: dCTP deaminase (188 aa).

Residues 111 to 116 (KSTYAR), 135 to 137 (TLE), Q156, Y170, and Q180 each bind dCTP. The active-site Proton donor/acceptor is the E137.

Belongs to the dCTP deaminase family. As to quaternary structure, homotrimer.

The enzyme catalyses dCTP + H2O + H(+) = dUTP + NH4(+). It functions in the pathway pyrimidine metabolism; dUMP biosynthesis; dUMP from dCTP (dUTP route): step 1/2. Its function is as follows. Catalyzes the deamination of dCTP to dUTP. In Dechloromonas aromatica (strain RCB), this protein is dCTP deaminase.